Consider the following 170-residue polypeptide: Phosphopantetheine adenylyltransferase (170 aa).

Position 10 (Thr-10) interacts with substrate. Residues 10 to 11 (TF) and His-18 contribute to the ATP site. Substrate is bound by residues Lys-42, Leu-75, and Arg-89. Residues 90–92 (GVR), Glu-100, and 125–131 (YTYVASS) each bind ATP.

Belongs to the bacterial CoaD family. In terms of assembly, homohexamer. It depends on Mg(2+) as a cofactor.

Its subcellular location is the cytoplasm. The enzyme catalyses (R)-4'-phosphopantetheine + ATP + H(+) = 3'-dephospho-CoA + diphosphate. Its pathway is cofactor biosynthesis; coenzyme A biosynthesis; CoA from (R)-pantothenate: step 4/5. Functionally, reversibly transfers an adenylyl group from ATP to 4'-phosphopantetheine, yielding dephospho-CoA (dPCoA) and pyrophosphate. The polypeptide is Phosphopantetheine adenylyltransferase (Chlorobium limicola (strain DSM 245 / NBRC 103803 / 6330)).